Here is a 104-residue protein sequence, read N- to C-terminus: Transcription and mRNA export factor ENY2 (104 aa).

Residues 1 to 14 are compositionally biased toward basic and acidic residues; the sequence is MADYGSDKKSRDNQ. The disordered stretch occupies residues 1–22; sequence MADYGSDKKSRDNQMRSAINQQ.

The protein belongs to the ENY2 family. In terms of assembly, component of the nuclear pore complex (NPC)-associated TREX-2 complex (transcription and export complex 2). Component of the SAGA transcription coactivator-HAT complex. Within the SAGA complex, participates in a subcomplex of SAGA called the DUB module (deubiquitination module).

Its subcellular location is the nucleus. It localises to the nucleoplasm. Involved in mRNA export coupled transcription activation by association with both the TREX-2 and the SAGA complexes. The transcription regulatory histone acetylation (HAT) complex SAGA is a multiprotein complex that activates transcription by remodeling chromatin and mediating histone acetylation and deubiquitination. Within the SAGA complex, participates in a subcomplex that specifically deubiquitinates histones. The SAGA complex is recruited to specific gene promoters by activators, where it is required for transcription. The TREX-2 complex functions in docking export-competent ribonucleoprotein particles (mRNPs) to the nuclear entrance of the nuclear pore complex (nuclear basket). TREX-2 participates in mRNA export and accurate chromatin positioning in the nucleus by tethering genes to the nuclear periphery. The polypeptide is Transcription and mRNA export factor ENY2 (Ciona intestinalis (Transparent sea squirt)).